Here is a 272-residue protein sequence, read N- to C-terminus: Ribosomal RNA small subunit methyltransferase A (272 aa).

The S-adenosyl-L-methionine site is built by H13, L15, G40, E61, D85, and N105.

The protein belongs to the class I-like SAM-binding methyltransferase superfamily. rRNA adenine N(6)-methyltransferase family. RsmA subfamily.

It localises to the cytoplasm. It carries out the reaction adenosine(1518)/adenosine(1519) in 16S rRNA + 4 S-adenosyl-L-methionine = N(6)-dimethyladenosine(1518)/N(6)-dimethyladenosine(1519) in 16S rRNA + 4 S-adenosyl-L-homocysteine + 4 H(+). Functionally, specifically dimethylates two adjacent adenosines (A1518 and A1519) in the loop of a conserved hairpin near the 3'-end of 16S rRNA in the 30S particle. May play a critical role in biogenesis of 30S subunits. The chain is Ribosomal RNA small subunit methyltransferase A from Bacteroides fragilis (strain ATCC 25285 / DSM 2151 / CCUG 4856 / JCM 11019 / LMG 10263 / NCTC 9343 / Onslow / VPI 2553 / EN-2).